We begin with the raw amino-acid sequence, 193 residues long: Segregation and condensation protein B (193 aa).

This sequence belongs to the ScpB family. Homodimer. Homodimerization may be required to stabilize the binding of ScpA to the Smc head domains. Component of a cohesin-like complex composed of ScpA, ScpB and the Smc homodimer, in which ScpA and ScpB bind to the head domain of Smc. The presence of the three proteins is required for the association of the complex with DNA.

It localises to the cytoplasm. Its function is as follows. Participates in chromosomal partition during cell division. May act via the formation of a condensin-like complex containing Smc and ScpA that pull DNA away from mid-cell into both cell halves. The sequence is that of Segregation and condensation protein B from Clostridium botulinum (strain ATCC 19397 / Type A).